The primary structure comprises 359 residues: Peptide chain release factor 1 (359 aa).

An N5-methylglutamine modification is found at Gln235. The disordered stretch occupies residues 287–312; that stretch reads AQEASAMRSAQVGSGDRSERIRTYNF.

This sequence belongs to the prokaryotic/mitochondrial release factor family. Methylated by PrmC. Methylation increases the termination efficiency of RF1.

The protein localises to the cytoplasm. Peptide chain release factor 1 directs the termination of translation in response to the peptide chain termination codons UAG and UAA. The protein is Peptide chain release factor 1 of Chlamydia trachomatis serovar A (strain ATCC VR-571B / DSM 19440 / HAR-13).